The sequence spans 494 residues: Ribose import ATP-binding protein RbsA (494 aa).

ABC transporter domains lie at 3-240 and 250-494; these read IEMK…VGRS and SQIS…TGGE. 35-42 is an ATP binding site; it reads GENGAGKS.

It belongs to the ABC transporter superfamily. Ribose importer (TC 3.A.1.2.1) family. The complex is composed of an ATP-binding protein (RbsA), two transmembrane proteins (RbsC) and a solute-binding protein (RbsB).

It is found in the cell membrane. The catalysed reaction is D-ribose(out) + ATP + H2O = D-ribose(in) + ADP + phosphate + H(+). Functionally, part of the ABC transporter complex RbsABC involved in ribose import. Responsible for energy coupling to the transport system. This chain is Ribose import ATP-binding protein RbsA, found in Bacillus cereus (strain ZK / E33L).